The following is a 215-amino-acid chain: Sodium channel regulatory subunit beta-3 (215 aa).

An N-terminal signal peptide occupies residues 1–22 (MPAFNRLFPLASLLLILWVGVC). Residues 23 to 156 (FPVCVEVPSE…EEAGEDFTSV (134 aa)) lie on the Extracellular side of the membrane. 2 disulfide bridges follow: cysteine 26-cysteine 48 and cysteine 45-cysteine 120. The Ig-like C2-type domain occupies 32–154 (ETEAVQGNPM…VTEEAGEDFT (123 aa)). N-linked (GlcNAc...) asparagine glycosylation is found at asparagine 95, asparagine 109, asparagine 113, and asparagine 121. A helical transmembrane segment spans residues 157–178 (VSEIMMYILLVFLTLWLLIEMI). Residues 179-215 (YCYRKVSKAEEAAQENASDYLAIPSENKENSAVPVEE) are Cytoplasmic-facing.

This sequence belongs to the sodium channel auxiliary subunit SCN3B (TC 8.A.17) family. As to quaternary structure, a voltage-gated sodium (Nav) channel consists of an ion-conducting pore-forming alpha subunit functional on its own that is regulated by one or more beta subunits. Forms homodimers and homotrimers. SCN3B is non-covalently associated with alpha subunits and induces the formation of alpha subunit oligomers, including trimers. Interacts with SCN5A/Nav1.5; regulatory subunit of SCN5A/Nav1.5. Interacts with SCN7A/Nav2.1; probable regulatory subunit of SCN7A/Nav2.1. Interacts with SCN10A; regulatory subunit of SCN10A/Nav1.8. Interacts with NFASC; probably involved in targeting the sodium channels to the nodes of Ranvier. Post-translationally, intramolecular disulfide bonds favor the voltage-gated sodium channel oligomeric complex assembly. N-glycosylated.

Its subcellular location is the cell membrane. In terms of biological role, regulatory subunit of multiple voltage-gated sodium (Nav) channels directly mediating the depolarization of excitable membranes. Navs, also called VGSCs (voltage-gated sodium channels) or VDSCs (voltage-dependent sodium channels), operate by switching between closed and open conformations depending on the voltage difference across the membrane. In the open conformation they allow Na(+) ions to selectively pass through the pore, along their electrochemical gradient. The influx of Na+ ions provokes membrane depolarization, initiating the propagation of electrical signals throughout cells and tissues. The accessory beta subunits participate in localization and functional modulation of the Nav channels. Modulates the activity of SCN2A/Nav1.2, causing a hyperpolarizing shift in the voltage-dependence of inactivation of the channel and increasing the fraction of channels operating in the fast gating mode. Modulates the activity of SCN5A/Nav1.5. Could also regulate the atypical sodium channel SCN7A/Nav2.1. Modulates the activity of SCN10A/Nav1.8, regulating its oligomerization and accelerating the recovery from inactivation. This chain is Sodium channel regulatory subunit beta-3, found in Bos taurus (Bovine).